We begin with the raw amino-acid sequence, 367 residues long: Glutamate 5-kinase (367 aa).

Lys-10 lines the ATP pocket. 3 residues coordinate substrate: Ser-50, Asp-137, and Asn-149. ATP is bound by residues 169–170 (TD) and 211–217 (TGGMSTK). In terms of domain architecture, PUA spans 275–353 (AGEITVDEGA…QEIDAILGYE (79 aa)).

The protein belongs to the glutamate 5-kinase family.

The protein localises to the cytoplasm. The enzyme catalyses L-glutamate + ATP = L-glutamyl 5-phosphate + ADP. Its pathway is amino-acid biosynthesis; L-proline biosynthesis; L-glutamate 5-semialdehyde from L-glutamate: step 1/2. In terms of biological role, catalyzes the transfer of a phosphate group to glutamate to form L-glutamate 5-phosphate. The protein is Glutamate 5-kinase of Escherichia fergusonii (strain ATCC 35469 / DSM 13698 / CCUG 18766 / IAM 14443 / JCM 21226 / LMG 7866 / NBRC 102419 / NCTC 12128 / CDC 0568-73).